Reading from the N-terminus, the 1104-residue chain is Nitrite reductase [NAD(P)H] (1104 aa).

An FAD-binding site is contributed by Q44 to E79. Residue Y146–T176 participates in NAD(+) binding. The tract at residues K396–P419 is disordered. C500, C502, C535, and C538 together coordinate [2Fe-2S] cluster. Residues C720, C726, C760, and C764 each contribute to the [4Fe-4S] cluster site. Residue C764 participates in siroheme binding. The Rieske domain occupies W932 to Y1040. Residues C976, H978, C1001, and H1004 each coordinate [2Fe-2S] cluster. The tract at residues G1081 to W1104 is disordered. Residues P1094–W1104 show a composition bias toward polar residues.

This sequence belongs to the nitrite and sulfite reductase 4Fe-4S domain family. In terms of assembly, homodimer. Siroheme is required as a cofactor. The cofactor is [4Fe-4S] cluster. It depends on FAD as a cofactor. Requires [2Fe-2S] cluster as cofactor.

It carries out the reaction NH4(+) + 3 NADP(+) + 2 H2O = nitrite + 3 NADPH + 5 H(+). It catalyses the reaction NH4(+) + 3 NAD(+) + 2 H2O = nitrite + 3 NADH + 5 H(+). Its pathway is nitrogen metabolism; nitrate reduction (assimilation). The chain is Nitrite reductase [NAD(P)H] (niiA) from Emericella nidulans (strain FGSC A4 / ATCC 38163 / CBS 112.46 / NRRL 194 / M139) (Aspergillus nidulans).